Here is a 259-residue protein sequence, read N- to C-terminus: Energy-coupling factor transporter ATP-binding protein EcfA1 (259 aa).

Positions 3 to 230 constitute an ABC transporter domain; sequence ITLNSVSFRY…EFDDVEIPFK (228 aa). ATP is bound at residue 38–43; that stretch reads GSGKTT. Catalysis depends on glutamate 157, which acts as the Proton acceptor.

This sequence belongs to the ABC transporter superfamily. Energy-coupling factor EcfA family. In terms of assembly, forms a heterodimer with EcfA2. Forms a stable energy-coupling factor (ECF) transporter complex composed of 2 membrane-embedded substrate-binding proteins (S component, RibU, BioY), 2 ATP-binding proteins (A component) and 2 transmembrane proteins (T component) upon coexpression in E.coli. Stable subcomplexes with both A plus T components can also be isolated. This complex interacts with at least 2 substrate-specific components, BioY and RibU.

The protein resides in the cell inner membrane. Functionally, ATP-binding (A) component of a common energy-coupling factor (ECF) ABC-transporter complex. Unlike classic ABC transporters this ECF transporter provides the energy necessary to transport a number of different substrates. Expression of the complex plus RibU in E.coli allows riboflavin uptake; uptake does not occur in the absence of RibU or the EcfA1A2T complex. This Thermotoga maritima (strain ATCC 43589 / DSM 3109 / JCM 10099 / NBRC 100826 / MSB8) protein is Energy-coupling factor transporter ATP-binding protein EcfA1.